The following is a 404-amino-acid chain: Propionate kinase (404 aa).

Belongs to the acetokinase family. PduW subfamily.

The protein localises to the cytoplasm. It carries out the reaction propanoate + ATP = propanoyl phosphate + ADP. The protein operates within polyol metabolism; 1,2-propanediol degradation. In terms of biological role, works with phosphate acetyltransferase (pta) to capture exogenous propionate and regenerate propionyl-CoA during degradation of 1,2-propanediol (1,2-PD). This chain is Propionate kinase, found in Klebsiella pneumoniae (strain 342).